Consider the following 715-residue polypeptide: SANT and BTB domain regulator of class switch recombination (715 aa).

Residues Asp21 to Lys59 form the SANT domain. The BTB domain maps to Met146–Met254. The span at Ser552 to Glu573 shows a compositional bias: acidic residues. 2 disordered regions span residues Ser552 to Gln623 and Ser689 to Thr715. Positions Gln578 to Glu605 are enriched in basic residues. Composition is skewed to polar residues over residues Asp614–Gln623 and Ala690–Thr699.

Belongs to the KIAA1841 family. As to quaternary structure, homodimer.

Functionally, negatively regulates class switch recombination or isotype switching in splenic B-cells. This Xenopus laevis (African clawed frog) protein is SANT and BTB domain regulator of class switch recombination.